We begin with the raw amino-acid sequence, 319 residues long: Protein SODIUM POTASSIUM ROOT DEFECTIVE 1 (319 aa).

Polar residues predominate over residues 1–13; the sequence is MLCASQASTTTLC. 2 disordered regions span residues 1–113 and 191–248; these read MLCA…TPQG and SPDN…NSSS. Residues 14-27 show a composition bias toward low complexity; it reads STMDQTSQPSSSSS. The span at 36–49 shows a compositional bias: basic and acidic residues; that stretch reads AIDRHNPIIRDGRR. Low complexity predominate over residues 58–67; it reads LNPSSSSSST. Polar residues-rich tracts occupy residues 104-113 and 200-210; these read SCFSSDTPQG and TKASPTASLSS. Residues 224–242 show a composition bias toward pro residues; it reads SPPPPPPPSPPQSSPPSPP. One can recognise an HMA domain in the interval 249–315; sequence DQVVVLRVSL…KVKNAQFWPE (67 aa). The Zn(2+) site is built by C260 and C263.

As to quaternary structure, interacts with FT, but not with TSF (TWIN SISTER OF FT). Expressed in vascular tissues of cotyledons, rosette leaves and roots in developing seedlings before and during the floral transition. Expressed specifically in the phloem companion cells. Not detected in embryos or seeds. Not detected in the vegetative shoot apex.

The protein localises to the cytoplasm. Its subcellular location is the nucleus. It localises to the endoplasmic reticulum. Required for root meristem maintenance after germination. Involved in phloem translocation, starch accumulation and flowering. Promotes flowering in the photoperiod pathway. Regulates long-distance movement of FT from leaves to the shoot apex through the phloem stream. This Arabidopsis thaliana (Mouse-ear cress) protein is Protein SODIUM POTASSIUM ROOT DEFECTIVE 1.